A 136-amino-acid chain; its full sequence is MLAPKKQKFRKAHKGRVVSKSKAGTTLAFGSFGLKSIDGWRVTARQIEAGRKAATRCMKRQGRLWIRIFPDLPVSKKPAEVRMGKGKGNPEFFAVRVSPGRIMFEIEGVEEDVAVKALELASAKLPVRTRIVRHYE.

Belongs to the universal ribosomal protein uL16 family. Part of the 50S ribosomal subunit.

Binds 23S rRNA and is also seen to make contacts with the A and possibly P site tRNAs. This Rickettsia bellii (strain OSU 85-389) protein is Large ribosomal subunit protein uL16.